Consider the following 99-residue polypeptide: UPF0125 protein BU253 (99 aa).

It belongs to the UPF0125 (RnfH) family.

The polypeptide is UPF0125 protein BU253 (Buchnera aphidicola subsp. Acyrthosiphon pisum (strain APS) (Acyrthosiphon pisum symbiotic bacterium)).